Here is a 554-residue protein sequence, read N- to C-terminus: Urocanate hydratase (554 aa).

Residues 51 to 52, Gln129, 175 to 177, Glu195, 241 to 242, 262 to 266, 272 to 273, and Tyr321 contribute to the NAD(+) site; these read GG, GMG, NA, QTSAH, and YL. The active site involves Cys409. Gly491 lines the NAD(+) pocket.

The protein belongs to the urocanase family. It depends on NAD(+) as a cofactor.

It is found in the cytoplasm. The enzyme catalyses 4-imidazolone-5-propanoate = trans-urocanate + H2O. Its pathway is amino-acid degradation; L-histidine degradation into L-glutamate; N-formimidoyl-L-glutamate from L-histidine: step 2/3. In terms of biological role, catalyzes the conversion of urocanate to 4-imidazolone-5-propionate. In Caulobacter vibrioides (strain ATCC 19089 / CIP 103742 / CB 15) (Caulobacter crescentus), this protein is Urocanate hydratase.